Here is a 394-residue protein sequence, read N- to C-terminus: Elongation factor Tu 2 (394 aa).

The tr-type G domain occupies 10–204 (KPHVNVGTIG…ALDSYIPQPE (195 aa)). Positions 19–26 (GHVDHGKT) are G1. Residue 19–26 (GHVDHGKT) participates in GTP binding. A Mg(2+)-binding site is contributed by Thr-26. A G2 region spans residues 60–64 (GITIN). Residues 81–84 (DCPG) are G3. GTP is bound by residues 81–85 (DCPGH) and 136–139 (NKCD). Residues 136–139 (NKCD) are G4. The interval 174 to 176 (SAL) is G5.

This sequence belongs to the TRAFAC class translation factor GTPase superfamily. Classic translation factor GTPase family. EF-Tu/EF-1A subfamily. In terms of assembly, monomer.

It is found in the cytoplasm. The catalysed reaction is GTP + H2O = GDP + phosphate + H(+). Its function is as follows. GTP hydrolase that promotes the GTP-dependent binding of aminoacyl-tRNA to the A-site of ribosomes during protein biosynthesis. The chain is Elongation factor Tu 2 from Yersinia pestis bv. Antiqua (strain Antiqua).